Here is a 282-residue protein sequence, read N- to C-terminus: MDILDKLRGGVIMDVTNPEQAKIAENAGAVAVMALERIPADIRAAGGVSRMSDPKMIKEIIKAVKIPVMAKVRIGHFVEASILEAIGIDFIDESEVLSPADEVYHVDKNKFKVPFVCGARNLGEALRRIQEGAKMIRTKGEAGTGDVIQAVKHMRQIQSEMRQLTCLREDELYVAAKNFQVPYALVEYVHKHGKLPVPNFSAGGVATPADAALMVHLGADGVFVGSGIFKSGDPAKRAAAIVKAVKNYDNPAILAEVSENLGPAMVGINEEEIKVIMSERGV.

Residue Asp14 participates in D-ribose 5-phosphate binding. The Schiff-base intermediate with D-ribose 5-phosphate role is filled by Lys71. Gly143 lines the D-ribose 5-phosphate pocket. Arg155 contacts D-glyceraldehyde 3-phosphate. D-ribose 5-phosphate-binding positions include Gly204 and 225–226; that span reads GS.

It belongs to the PdxS/SNZ family. As to quaternary structure, in the presence of PdxT, forms a dodecamer of heterodimers.

It carries out the reaction aldehydo-D-ribose 5-phosphate + D-glyceraldehyde 3-phosphate + L-glutamine = pyridoxal 5'-phosphate + L-glutamate + phosphate + 3 H2O + H(+). The protein operates within cofactor biosynthesis; pyridoxal 5'-phosphate biosynthesis. Its function is as follows. Catalyzes the formation of pyridoxal 5'-phosphate from ribose 5-phosphate (RBP), glyceraldehyde 3-phosphate (G3P) and ammonia. The ammonia is provided by the PdxT subunit. Can also use ribulose 5-phosphate and dihydroxyacetone phosphate as substrates, resulting from enzyme-catalyzed isomerization of RBP and G3P, respectively. In Treponema denticola (strain ATCC 35405 / DSM 14222 / CIP 103919 / JCM 8153 / KCTC 15104), this protein is Pyridoxal 5'-phosphate synthase subunit PdxS.